Reading from the N-terminus, the 338-residue chain is Solute carrier family 35 member G5 (338 aa).

A disordered region spans residues 1–21 (MAGSHPYFNLPDSTHPSPPSA). A run of 9 helical transmembrane segments spans residues 37 to 57 (TNGLLVALLGGGLPAGFVGPL), 67 to 87 (LPSLELLICRCLFHLPIALPL), 105 to 125 (CFCALLNVLSIGCAYSAVQVV), 160 to 180 (CGLLGSILGLIIIVGPGLWTL), 190 to 210 (ALGYVQAFLGGLALSLGLLVY), 221 to 241 (TVAFLFGLVGLLGFVPGLFVL), 250 to 270 (LLSWSCVGAVGILALVSFTCV), 281 to 301 (LVCAVLHSEVVVALILQYYVL), and 305 to 325 (VAPFDITGAGIVLGSIAIITA). Residues 49–174 (LPAGFVGPLS…SILGLIIIVG (126 aa)) form the EamA 1 domain. One can recognise an EamA 2 domain in the interval 272-325 (YAVTKAHPALVCAVLHSEVVVALILQYYVLHETVAPFDITGAGIVLGSIAIITA).

It belongs to the SLC35G solute transporter family.

Its subcellular location is the membrane. The protein is Solute carrier family 35 member G5 (SLC35G5) of Pan paniscus (Pygmy chimpanzee).